We begin with the raw amino-acid sequence, 295 residues long: MMSRTPDARARDTQTKQIQENITSVEKHFGDLCQLFAAYVRKTARLRDKADLLVKEINVYADTETPNLKCGLKNFADQLAKVQDYRQAEVERLEVKVIEPLKAYGNIVKTKREDLKQTQSARNREAKQMQQLERMRQRNPSDRQIISQAESELQRATMDATRTTRQLEETIDDFEKQKIRDIKKVLGEFVTVEMAFHAKALEIYTTAYQHIQNVDEEGDLEVFRNSLHPPDYQSRLEIVRANSKLSLNRTGTSMSKSGTMQSRTSSRQRKRDDEEDEEEDDEDEDDLEEVTDDEH.

The transit peptide at 1–49 (MMSRTPDARARDTQTKQIQENITSVEKHFGDLCQLFAAYVRKTARLRDK) directs the protein to the mitochondrion. Residues 12 to 222 (DTQTKQIQEN…NVDEEGDLEV (211 aa)) are BAR-like. Residues 111 to 185 (KREDLKQTQS…KQKIRDIKKV (75 aa)) are a coiled coil. A compositionally biased stretch (polar residues) spans 243–265 (SKLSLNRTGTSMSKSGTMQSRTS). The disordered stretch occupies residues 243-295 (SKLSLNRTGTSMSKSGTMQSRTSSRQRKRDDEEDEEEDDEDEDDLEEVTDDEH). Over residues 273 to 295 (DEEDEEEDDEDEDDLEEVTDDEH) the composition is skewed to acidic residues.

Belongs to the CIBAR family.

It is found in the cytoplasm. Its subcellular location is the cytoskeleton. The protein resides in the microtubule organizing center. The protein localises to the centrosome. It localises to the centriole. It is found in the cell projection. Its subcellular location is the cilium. The protein resides in the nucleus. The protein localises to the mitochondrion inner membrane. It localises to the flagellum. In terms of biological role, plays a critical role in regulating mitochondrial ultrastructure and function by maintaining the integrity of mitochondrial morphology, particularly the organization of cristae. Plays a crucial role in ciliogenesis. Plays a key role in the correct positioning of the annulus, a septin-based ring structure in the sperm flagellum, serving both as a physical barrier and a membrane diffusion barrier that separates the midpiece (MP) from the principal piece (PP). In Danio rerio (Zebrafish), this protein is CBY1-interacting BAR domain-containing protein 1 (cibar1).